Here is a 426-residue protein sequence, read N- to C-terminus: MSSPRKVRGKTGRDNDEEEGNSGNLNLRNSLPSSSQKMTPTKPIFGNKMNSENVKPSHHLSFSDKYELVYPEPLESDTDETVWDVSDRSLRNRWNSMDSETAGPSKTVSPVLSGSSRLSKDTETSVSEKELTQLAQIRPLIFNSSARSAMRDCLNTLQKKEELDIIREFLELEQMTLPDDFNSGNTLQNRDKNRYRDILPYDSTRVPLGKNKDYINASYIRIVNHEEEYFYIATQGPLPETIEDFWQMVLENNCNVIAMITREIECGVIKCYSYWPISLKEPLEFEHFSVFLETFHVTQYFTVRVFQIVKKSTGKSQCVKHLQFTKWPDHGTPASADFFIKYVRYVRKSHITGPLLVHCSAGVGRTGVFICVDVVFSAIEKNYSFDIMNIVTQMRKQRCGMIQTKEQYQFCYEIVLEVLQNLLALY.

Basic residues predominate over residues M1 to K10. The interval M1–H58 is disordered. Positions N21 to S35 are enriched in low complexity. Phosphoserine is present on S76. A compositionally biased stretch (polar residues) spans N95 to R117. Positions N95–T124 are disordered. S127 carries the post-translational modification Phosphoserine. Residues I165–V418 enclose the Tyrosine-protein phosphatase domain. Residues D329, C359–R365, and Q403 contribute to the substrate site. Residue C359 is the Phosphocysteine intermediate of the active site.

Belongs to the protein-tyrosine phosphatase family. Non-receptor class subfamily. In terms of tissue distribution, testis-specific. Specifically expressed in testicular germ cells that undergo meiosis (at protein level).

The protein localises to the nucleus. Its subcellular location is the cytoplasm. The protein resides in the cytoskeleton. It localises to the microtubule organizing center. It is found in the centrosome. It catalyses the reaction O-phospho-L-tyrosyl-[protein] + H2O = L-tyrosyl-[protein] + phosphate. Functionally, tyrosine-protein phosphatase targeted to sites of actin polymerization in response of varied extracellular stimuli. Has tyrosine phosphatase activity towards various tyrosyl phosphorylated substrates. The protein is Tyrosine-protein phosphatase non-receptor type 20 (Ptpn20) of Mus musculus (Mouse).